The primary structure comprises 253 residues: MAGHSKWANIKHKKAKEDRKRGKLFSKLSKMITVAAREGGGDPEMNPDLRLAIQKAKDNNMPNDNIERAIKRGTGELEGVKYEKFVYEGYGPGGVALYLELMSDNRNRTAAEIRHVLSKNGGNLGESGCVSWMFKRRGQLIVDLNESDFDEDELMLEALEAGAEDVVTEDNLLTIYTDPSDFEEVRKQLEEQGIKFSSADIAMVPENNVNVDDKSTAKKVLKLMDALEDHDDVQEVYSNFDIPDEIMEEITEE.

Residues 1-21 (MAGHSKWANIKHKKAKEDRKR) form a disordered region.

It belongs to the TACO1 family.

Its subcellular location is the cytoplasm. The polypeptide is Probable transcriptional regulatory protein Hore_12350 (Halothermothrix orenii (strain H 168 / OCM 544 / DSM 9562)).